A 288-amino-acid polypeptide reads, in one-letter code: Serine/threonine-protein kinase pef1 (288 aa).

In terms of domain architecture, Protein kinase spans 3–285 (YQRLEKLGEG…GQDALQHAWF (283 aa)). ATP-binding positions include 9-17 (LGEGTYAHV) and K32. T13 carries the post-translational modification Phosphothreonine. Position 14 is a phosphotyrosine (Y14). D126 acts as the Proton acceptor in catalysis.

This sequence belongs to the protein kinase superfamily. CMGC Ser/Thr protein kinase family. CDC2/CDKX subfamily. Interacts with the pas1 cyclin.

The enzyme catalyses L-seryl-[protein] + ATP = O-phospho-L-seryl-[protein] + ADP + H(+). It catalyses the reaction L-threonyl-[protein] + ATP = O-phospho-L-threonyl-[protein] + ADP + H(+). The sequence is that of Serine/threonine-protein kinase pef1 (pef1) from Schizosaccharomyces pombe (strain 972 / ATCC 24843) (Fission yeast).